The sequence spans 269 residues: Nitrogen regulatory protein DAL80 (269 aa).

The segment at 31–55 (CQNCFTVKTPLWRRDEHGTVLCNAC) adopts a GATA-type zinc-finger fold.

It localises to the nucleus. Its function is as follows. Negative regulator of multiple nitrogen catabolic genes including the allantoin pathway genes. This chain is Nitrogen regulatory protein DAL80 (DAL80), found in Saccharomyces cerevisiae (strain ATCC 204508 / S288c) (Baker's yeast).